A 262-amino-acid polypeptide reads, in one-letter code: Orotidine 5'-phosphate decarboxylase (262 aa).

Substrate is bound by residues Asp35, 57-59 (KTH), 89-98 (DRKFADIGNT), Tyr215, and Arg233. The active-site Proton donor is the Lys91.

It belongs to the OMP decarboxylase family.

The catalysed reaction is orotidine 5'-phosphate + H(+) = UMP + CO2. Its pathway is pyrimidine metabolism; UMP biosynthesis via de novo pathway; UMP from orotate: step 2/2. The chain is Orotidine 5'-phosphate decarboxylase (URA3) from Pichia kudriavzevii (Yeast).